The sequence spans 49 residues: Large ribosomal subunit protein bL33A (49 aa).

Belongs to the bacterial ribosomal protein bL33 family.

The chain is Large ribosomal subunit protein bL33A from Levilactobacillus brevis (strain ATCC 367 / BCRC 12310 / CIP 105137 / JCM 1170 / LMG 11437 / NCIMB 947 / NCTC 947) (Lactobacillus brevis).